A 376-amino-acid polypeptide reads, in one-letter code: PqqA peptide cyclase (376 aa).

Residues 7 to 222 (VGLPLWLLAE…TNEYRDKLKA (216 aa)) enclose the Radical SAM core domain. Residues cysteine 21, cysteine 25, and cysteine 28 each contribute to the [4Fe-4S] cluster site.

It belongs to the radical SAM superfamily. PqqE family. In terms of assembly, interacts with PqqD. The interaction is necessary for activity of PqqE. [4Fe-4S] cluster serves as cofactor.

The catalysed reaction is [PQQ precursor protein] + S-adenosyl-L-methionine = E-Y cross-linked-[PQQ precursor protein] + 5'-deoxyadenosine + L-methionine + H(+). The protein operates within cofactor biosynthesis; pyrroloquinoline quinone biosynthesis. In terms of biological role, catalyzes the cross-linking of a glutamate residue and a tyrosine residue in the PqqA protein as part of the biosynthesis of pyrroloquinoline quinone (PQQ). This Pseudomonas putida (strain ATCC 700007 / DSM 6899 / JCM 31910 / BCRC 17059 / LMG 24140 / F1) protein is PqqA peptide cyclase.